Reading from the N-terminus, the 533-residue chain is MSSQVEHPAGGYKKLFETVEELSSPLTAHVTGRIPLWLTGSLLRCGPGLFEVGSEPFYHLFDGQALLHKFDFKEGHVTYHRRFIRTDAYVRAMTEKRIVITEFGTCAFPDPCKNIFSRFFSYFRGVEVTDNALVNIYPVGEDYYACTETNFITKVNPETLETIKQVDLCNYVSVNGATAHPHIENDGTVYNIGNCFGKNFSIAYNIVKIPPLQADKEDPISKSEIVVQFPCSDRFKPSYVHSFGLTPNYIVFVETPVKINLFKFLSSWSLWGANYMDCFESNETMGVWLHIADKKRKKYINNKYRTSPFNLFHHINTYEDHEFLIVDLCCWKGFEFVYNYLYLANLRENWEEVKKNARKAPQPEVRRYVLPLNIDKADTGKNLVTLPNTTATAILCSDETIWLEPEVLFSGPRQAFEFPQINYQKYGGKPYTYAYGLGLNHFVPDRLCKLNVKTKETWVWQEPDSYPSEPIFVSHPDALEEDDGVVLSVVVSPGAGQKPAYLLILNAKDLSEVARAEVEINIPVTFHGLFKKS.

Ser2 carries the N-acetylserine modification. Phosphothreonine is present on residues Thr101 and Thr105. Residue Cys112 is the site of S-palmitoyl cysteine; in membrane form attachment. Lys113 is subject to N6-acetyllysine. Ser117 is subject to Phosphoserine. Residue His180 coordinates Fe cation. Cys231 carries the S-palmitoyl cysteine; in membrane form lipid modification. Residues His241 and His313 each contribute to the Fe cation site. Residues Cys329 and Cys330 are each lipidated (S-palmitoyl cysteine; in membrane form). His527 is a Fe cation binding site.

This sequence belongs to the carotenoid oxygenase family. As to quaternary structure, interacts with MYO7A; this mediates light-dependent intracellular transport of RPE65. Requires Fe(2+) as cofactor. In terms of processing, palmitoylation by LRAT regulates ligand binding specificity; the palmitoylated form (membrane form) specifically binds all-trans-retinyl-palmitate, while the soluble unpalmitoylated form binds all-trans-retinol (vitamin A). Retinal pigment epithelium specific.

Its subcellular location is the cytoplasm. The protein localises to the cell membrane. It localises to the microsome membrane. It carries out the reaction an all-trans-retinyl ester + H2O = 11-cis-retinol + a fatty acid + H(+). The enzyme catalyses lutein = (3R,3'S)-zeaxanthin. It catalyses the reaction all-trans-retinyl hexadecanoate + H2O = 11-cis-retinol + hexadecanoate + H(+). In terms of biological role, critical isomerohydrolase in the retinoid cycle involved in regeneration of 11-cis-retinal, the chromophore of rod and cone opsins. Catalyzes the cleavage and isomerization of all-trans-retinyl fatty acid esters to 11-cis-retinol which is further oxidized by 11-cis retinol dehydrogenase to 11-cis-retinal for use as visual chromophore. Essential for the production of 11-cis retinal for both rod and cone photoreceptors. Also capable of catalyzing the isomerization of lutein to meso-zeaxanthin an eye-specific carotenoid. The soluble form binds vitamin A (all-trans-retinol), making it available for LRAT processing to all-trans-retinyl ester. The membrane form, palmitoylated by LRAT, binds all-trans-retinyl esters, making them available for IMH (isomerohydrolase) processing to all-cis-retinol. The soluble form is regenerated by transferring its palmitoyl groups onto 11-cis-retinol, a reaction catalyzed by LRAT. The polypeptide is Retinoid isomerohydrolase (RPE65) (Bos taurus (Bovine)).